The sequence spans 176 residues: Trypsin inhibitor 1B (176 aa).

2 disulfide bridges follow: Cys39–Cys83 and Cys132–Cys143.

It belongs to the protease inhibitor I3 (leguminous Kunitz-type inhibitor) family.

Functionally, inhibits trypsin stoichiometrically. The protein is Trypsin inhibitor 1B of Erythrina variegata (Indian coral tree).